The sequence spans 378 residues: MMYSRFRTVAKNLKSTTKPFSFTTATTTTTVSSSEFPQNLTELRARLARESPSLSDFISLKSNNAYSVEVGTKKNPLPKPKWMKESIPGGWKYVQIKKKLRELKLHTVCEEAKCPNMGECWSGGETGTATATIMILGDTCTRGCRFCNVKTSRTPPPPDPDEPTNVAEAIASWGLDYVVITSVGRDDLPDQGSSHFTETVQKLKILKPSILIEALVPDFRGNAECVEKVSKSGLDVFAHNIETVEELQSAVRDHRANFNQSLDVLRMAKDYAPAGTLTKTSIMLGCGETPDQIVKTMEKVRAAGVDVMTFGQYMRPSKRHMPVSEYITPEAFEKYQTLGMEMGFRYVASGPMVRSSYKAGEFYIKSMIDSDRAVSSQS.

[4Fe-4S] cluster is bound by residues Cys-109, Cys-114, Cys-120, Cys-140, Cys-144, Cys-147, and Ser-356. In terms of domain architecture, Radical SAM core spans 125–345; it reads ETGTATATIM…QTLGMEMGFR (221 aa).

It belongs to the radical SAM superfamily. Lipoyl synthase family. The cofactor is [4Fe-4S] cluster.

The protein localises to the mitochondrion. The enzyme catalyses [[Fe-S] cluster scaffold protein carrying a second [4Fe-4S](2+) cluster] + N(6)-octanoyl-L-lysyl-[protein] + 2 oxidized [2Fe-2S]-[ferredoxin] + 2 S-adenosyl-L-methionine + 4 H(+) = [[Fe-S] cluster scaffold protein] + N(6)-[(R)-dihydrolipoyl]-L-lysyl-[protein] + 4 Fe(3+) + 2 hydrogen sulfide + 2 5'-deoxyadenosine + 2 L-methionine + 2 reduced [2Fe-2S]-[ferredoxin]. It participates in protein modification; protein lipoylation via endogenous pathway; protein N(6)-(lipoyl)lysine from octanoyl-[acyl-carrier-protein]: step 2/2. Functionally, catalyzes the radical-mediated insertion of two sulfur atoms into the C-6 and C-8 positions of the octanoyl moiety bound to the lipoyl domains of lipoate-dependent enzymes, thereby converting the octanoylated domains into lipoylated derivatives. This chain is Lipoyl synthase, mitochondrial, found in Medicago truncatula (Barrel medic).